We begin with the raw amino-acid sequence, 95 residues long: Large ribosomal subunit protein bL28 (95 aa).

A disordered region spans residues 1–22; sequence MSRRCELTGKGPMTGNNVSHAN.

This sequence belongs to the bacterial ribosomal protein bL28 family.

This chain is Large ribosomal subunit protein bL28, found in Ruegeria pomeroyi (strain ATCC 700808 / DSM 15171 / DSS-3) (Silicibacter pomeroyi).